Here is a 319-residue protein sequence, read N- to C-terminus: 4-hydroxy-3-methylbut-2-enyl diphosphate reductase (319 aa).

Residue Cys-15 participates in [4Fe-4S] cluster binding. (2E)-4-hydroxy-3-methylbut-2-enyl diphosphate contacts are provided by His-44 and His-77. Dimethylallyl diphosphate is bound by residues His-44 and His-77. Residues His-44 and His-77 each coordinate isopentenyl diphosphate. Residue Cys-99 participates in [4Fe-4S] cluster binding. His-127 is a (2E)-4-hydroxy-3-methylbut-2-enyl diphosphate binding site. His-127 contributes to the dimethylallyl diphosphate binding site. Isopentenyl diphosphate is bound at residue His-127. Glu-129 serves as the catalytic Proton donor. Thr-167 contacts (2E)-4-hydroxy-3-methylbut-2-enyl diphosphate. Residue Cys-197 participates in [4Fe-4S] cluster binding. (2E)-4-hydroxy-3-methylbut-2-enyl diphosphate contacts are provided by Ser-225, Ser-226, Asn-227, and Ser-269. Dimethylallyl diphosphate is bound by residues Ser-225, Ser-226, Asn-227, and Ser-269. Residues Ser-225, Ser-226, Asn-227, and Ser-269 each contribute to the isopentenyl diphosphate site.

Belongs to the IspH family. [4Fe-4S] cluster is required as a cofactor.

It carries out the reaction isopentenyl diphosphate + 2 oxidized [2Fe-2S]-[ferredoxin] + H2O = (2E)-4-hydroxy-3-methylbut-2-enyl diphosphate + 2 reduced [2Fe-2S]-[ferredoxin] + 2 H(+). It catalyses the reaction dimethylallyl diphosphate + 2 oxidized [2Fe-2S]-[ferredoxin] + H2O = (2E)-4-hydroxy-3-methylbut-2-enyl diphosphate + 2 reduced [2Fe-2S]-[ferredoxin] + 2 H(+). It functions in the pathway isoprenoid biosynthesis; dimethylallyl diphosphate biosynthesis; dimethylallyl diphosphate from (2E)-4-hydroxy-3-methylbutenyl diphosphate: step 1/1. The protein operates within isoprenoid biosynthesis; isopentenyl diphosphate biosynthesis via DXP pathway; isopentenyl diphosphate from 1-deoxy-D-xylulose 5-phosphate: step 6/6. Catalyzes the conversion of 1-hydroxy-2-methyl-2-(E)-butenyl 4-diphosphate (HMBPP) into a mixture of isopentenyl diphosphate (IPP) and dimethylallyl diphosphate (DMAPP). Acts in the terminal step of the DOXP/MEP pathway for isoprenoid precursor biosynthesis. This Rhodopirellula baltica (strain DSM 10527 / NCIMB 13988 / SH1) protein is 4-hydroxy-3-methylbut-2-enyl diphosphate reductase.